The sequence spans 234 residues: Small ribosomal subunit protein eS1y (234 aa).

The segment covering 1–18 has biased composition (basic residues); sequence MAVGKNKRISKGKKGGKK. The disordered stretch occupies residues 1 to 20; that stretch reads MAVGKNKRISKGKKGGKKKA.

Belongs to the eukaryotic ribosomal protein eS1 family. Component of the small ribosomal subunit. Mature ribosomes consist of a small (40S) and a large (60S) subunit. The 40S subunit contains about 33 different proteins and 1 molecule of RNA (18S). The 60S subunit contains about 49 different proteins and 3 molecules of RNA (25S, 5.8S and 5S).

The protein resides in the cytoplasm. The polypeptide is Small ribosomal subunit protein eS1y (Vitis vinifera (Grape)).